A 543-amino-acid chain; its full sequence is EH domain-containing protein 2 (543 aa).

Ser-3 and Ser-44 each carry phosphoserine. In terms of domain architecture, Dynamin-type G spans 55-286 (FDGKPMVLVA…DLFRDIQGLP (232 aa)). Residues 65 to 72 (GQYSTGKT) form a G1 motif region. 65 to 72 (GQYSTGKT) is an ATP binding site. The interval 91 to 92 (EP) is G2 motif. The G3 motif stretch occupies residues 153-156 (DTPG). A G4 motif region spans residues 219 to 222 (NKAD). Lys-220 lines the ATP pocket. A region of interest (G5 motif) is located at residue Val-243. Trp-258 provides a ligand contact to ATP. The interval 320–340 (TVFGKENKKKQLILKLPVIFA) is mediates membrane-binding. 5 positions are modified to phosphoserine: Ser-438, Ser-468, Ser-470, Ser-484, and Ser-493. The EH domain occupies 449–537 (DKSKYDEIFY…RRLVPPSKRR (89 aa)). One can recognise an EF-hand domain in the interval 481–516 (LPNSVLGRIWKLSDVDRDGMLDDEEFALASHLIEAK). The Ca(2+) site is built by Asp-494, Asp-496, Asp-498, Met-500, and Glu-505. A disordered region spans residues 521-543 (GLPTNLPRRLVPPSKRRQKGSAE). Over residues 534 to 543 (SKRRQKGSAE) the composition is skewed to basic residues.

The protein belongs to the TRAFAC class dynamin-like GTPase superfamily. Dynamin/Fzo/YdjA family. EHD subfamily. As to quaternary structure, homodimer and homooligomer. Interacts with EHD1. May also interact with EHD3 and EHD4. Interacts with MYOF. Interacts with EHBP1. Interacts with FER1L5 (via second C2 domain). Interacts with CAV1 in a cholesterol-dependent manner. Interacts (via EH domain) with PACSIN2 (via NPF motifs); this interaction probably stabilizes the caveolae. As to expression, detected in lung and adipocytes. Detected at lower levels in heart and skeletal muscle.

Its subcellular location is the cell membrane. It is found in the membrane. The protein resides in the caveola. The protein localises to the endosome membrane. It localises to the cytoplasm. Its subcellular location is the cytosol. With respect to regulation, the very low intrinsic ATPase activity is increased upon interaction with liposomes. ATP- and membrane-binding protein that controls membrane reorganization/tubulation upon ATP hydrolysis. Plays a role in membrane trafficking between the plasma membrane and endosomes. Important for the internalization of GLUT4. Required for fusion of myoblasts to skeletal muscle myotubes. Required for normal translocation of FER1L5 to the plasma membrane. Regulates the equilibrium between cell surface-associated and cell surface-dissociated caveolae by constraining caveolae at the cell membrane. This chain is EH domain-containing protein 2, found in Mus musculus (Mouse).